A 182-amino-acid chain; its full sequence is MSPTPDKQANADAPVAVAPAPGPVSQWLSQQGFEHELLEPDHVGVEQIAVEALFLPVIAAALKSHGFDYLQCQGGYDEGPGERLVCFYHLLAMAEVAEGSADQVREVRLKVFLSREGQPSVPSLYGLFRGADWQERETFDMFGIQFEGHPHPKRLLMPEDWTGWPLRKDYVQPDFYEMQDAY.

The protein belongs to the complex I 30 kDa subunit family. NDH-1 can be composed of about 15 different subunits; different subcomplexes with different compositions have been identified which probably have different functions.

The protein resides in the cellular thylakoid membrane. The enzyme catalyses a plastoquinone + NADH + (n+1) H(+)(in) = a plastoquinol + NAD(+) + n H(+)(out). It catalyses the reaction a plastoquinone + NADPH + (n+1) H(+)(in) = a plastoquinol + NADP(+) + n H(+)(out). Functionally, NDH-1 shuttles electrons from an unknown electron donor, via FMN and iron-sulfur (Fe-S) centers, to quinones in the respiratory and/or the photosynthetic chain. The immediate electron acceptor for the enzyme in this species is believed to be plastoquinone. Couples the redox reaction to proton translocation, and thus conserves the redox energy in a proton gradient. Cyanobacterial NDH-1 also plays a role in inorganic carbon-concentration. In Synechococcus sp. (strain WH7803), this protein is NAD(P)H-quinone oxidoreductase subunit J.